The primary structure comprises 555 residues: Formate--tetrahydrofolate ligase (555 aa).

ATP is bound at residue 65 to 72; that stretch reads TPAGEGKS.

The protein belongs to the formate--tetrahydrofolate ligase family.

The enzyme catalyses (6S)-5,6,7,8-tetrahydrofolate + formate + ATP = (6R)-10-formyltetrahydrofolate + ADP + phosphate. The protein operates within one-carbon metabolism; tetrahydrofolate interconversion. This chain is Formate--tetrahydrofolate ligase, found in Staphylococcus aureus (strain Mu3 / ATCC 700698).